Consider the following 172-residue polypeptide: uncharacterized protein (172 aa).

Positions 130 to 154 (EQEKGAAPQEGKDWQVISEEDKKNQ) are disordered.

This is an uncharacterized protein from Bacillus subtilis (strain 168).